A 122-amino-acid chain; its full sequence is Large ribosomal subunit protein uL14 (122 aa).

This sequence belongs to the universal ribosomal protein uL14 family. Part of the 50S ribosomal subunit. Forms a cluster with proteins L3 and L19. In the 70S ribosome, L14 and L19 interact and together make contacts with the 16S rRNA in bridges B5 and B8.

Its function is as follows. Binds to 23S rRNA. Forms part of two intersubunit bridges in the 70S ribosome. In Sulfurovum sp. (strain NBC37-1), this protein is Large ribosomal subunit protein uL14.